Here is a 505-residue protein sequence, read N- to C-terminus: L-carnitine/gamma-butyrobetaine antiporter (505 aa).

A run of 12 helical transmembrane segments spans residues 10 to 30, 51 to 71, 92 to 112, 143 to 163, 195 to 215, 231 to 251, 263 to 283, 316 to 336, 347 to 367, 403 to 423, 446 to 466, and 475 to 495; these read IEPK…WLTV, WGWA…WLVF, IFMM…SIEI, GPLP…FFFV, FYLV…TPLV, LDAI…ACGL, SYLS…SFIM, WTVF…IFLA, LCFG…TVLG, LSTA…VTLI, LLVR…LLAL, and AIIA…LSFI.

The protein belongs to the BCCT transporter (TC 2.A.15) family. CaiT subfamily. As to quaternary structure, homotrimer.

It is found in the cell inner membrane. The enzyme catalyses 4-(trimethylamino)butanoate(in) + (R)-carnitine(out) = 4-(trimethylamino)butanoate(out) + (R)-carnitine(in). The protein operates within amine and polyamine metabolism; carnitine metabolism. Its function is as follows. Catalyzes the exchange of L-carnitine for gamma-butyrobetaine. The protein is L-carnitine/gamma-butyrobetaine antiporter of Salmonella agona (strain SL483).